We begin with the raw amino-acid sequence, 164 residues long: CDP-archaeol synthase (164 aa).

Transmembrane regions (helical) follow at residues 3-23 (LLYF…AVLA), 51-71 (YEGF…PNLL), 77-97 (LLDA…GAFI), and 122-142 (LAVY…AVII).

This sequence belongs to the CDP-archaeol synthase family. Requires Mg(2+) as cofactor.

It localises to the cell membrane. It carries out the reaction 2,3-bis-O-(geranylgeranyl)-sn-glycerol 1-phosphate + CTP + H(+) = CDP-2,3-bis-O-(geranylgeranyl)-sn-glycerol + diphosphate. The protein operates within membrane lipid metabolism; glycerophospholipid metabolism. In terms of biological role, catalyzes the formation of CDP-2,3-bis-(O-geranylgeranyl)-sn-glycerol (CDP-archaeol) from 2,3-bis-(O-geranylgeranyl)-sn-glycerol 1-phosphate (DGGGP) and CTP. This reaction is the third ether-bond-formation step in the biosynthesis of archaeal membrane lipids. The sequence is that of CDP-archaeol synthase from Pyrobaculum islandicum (strain DSM 4184 / JCM 9189 / GEO3).